Consider the following 1755-residue polypeptide: Transposon Ty1-PR1 Gag-Pol polyprotein (1755 aa).

Composition is skewed to polar residues over residues 1 to 23, 48 to 60, 71 to 93, and 127 to 152; these read MESQQLSQHSPISHGSACASVTS, TKANSQQTTTPAS, SPQTAQSHSPQNGPYPQQCMMTQ, and QSQFPQYPSSVGTPLSTPSPESGNTF. 3 disordered regions span residues 1–93, 126–173, and 352–421; these read MESQ…MMTQ, PQSQ…RPPP, and GSRN…SKST. Over residues 153–165 the composition is skewed to low complexity; it reads TDSSSADSDMTST. Residues 299 to 401 are RNA-binding; that stretch reads NNGIHINNKV…NSKSKTARAH (103 aa). The segment covering 402–418 has biased composition (low complexity); the sequence is NVSTSNNSPSTDNDSIS. Ser416 carries the phosphoserine modification. Asp461 serves as the catalytic For protease activity; shared with dimeric partner. An integrase-type zinc finger-like region spans residues 583–640; sequence NVHTSESTRKYPYPFIHRMLAHANAQTIRYSLKNNTITYFNESDVDWSSAIDYQCPDC. The 176-residue stretch at 660-835 folds into the Integrase catalytic domain; sequence NSYEPFQYLH…AGLDISTLLP (176 aa). 2 residues coordinate Mg(2+): Asp671 and Asp736. 3 disordered regions span residues 956–1087, 1092–1111, and 1130–1187; these read SKAV…ETEK, RSPSIDASPPENNSSHNIVP, and DLPL…DNET. The span at 960-969 shows a compositional bias: low complexity; that stretch reads SPTDSTPPST. Residues 1005 to 1015 show a composition bias toward polar residues; it reads STPQISNIEST. Residues 1038-1053 are compositionally biased toward basic and acidic residues; it reads ESSHASKSKDFRHSDS. Polar residues-rich tracts occupy residues 1054-1082 and 1101-1111; these read YSENETNHTNVPISSTGGTNNKTVPQISD and PENNSSHNIVP. The Bipartite nuclear localization signal motif lies at 1178–1212; the sequence is KKRSLEDNETEIKVSRDTWNTKNMRSLEPPRSKKR. The Reverse transcriptase Ty1/copia-type domain maps to 1338–1476; it reads NNYYITQLDI…DILGLEIKYQ (139 aa). Positions 1346, 1427, 1428, 1610, 1652, and 1685 each coordinate Mg(2+). The 143-residue stretch at 1610–1752 folds into the RNase H Ty1/copia-type domain; the sequence is DASYGNQPYY…IKTFKLLTNK (143 aa).

In terms of assembly, the capsid protein forms a homotrimer, from which the VLPs are assembled. The protease is a homodimer, whose active site consists of two apposed aspartic acid residues. Post-translationally, initially, virus-like particles (VLPs) are composed of the structural unprocessed proteins Gag and Gag-Pol, and also contain the host initiator methionine tRNA (tRNA(i)-Met) which serves as a primer for minus-strand DNA synthesis, and a dimer of genomic Ty RNA. Processing of the polyproteins occurs within the particle and proceeds by an ordered pathway, called maturation. First, the protease (PR) is released by autocatalytic cleavage of the Gag-Pol polyprotein yielding capsid protein p45 and a Pol-p154 precursor protein. This cleavage is a prerequisite for subsequent processing of Pol-p154 at the remaining sites to release the mature structural and catalytic proteins. Maturation takes place prior to the RT reaction and is required to produce transposition-competent VLPs.

It is found in the cytoplasm. Its subcellular location is the nucleus. The catalysed reaction is DNA(n) + a 2'-deoxyribonucleoside 5'-triphosphate = DNA(n+1) + diphosphate. It carries out the reaction Endonucleolytic cleavage to 5'-phosphomonoester.. In terms of biological role, capsid protein (CA) is the structural component of the virus-like particle (VLP), forming the shell that encapsulates the retrotransposons dimeric RNA genome. The particles are assembled from trimer-clustered units and there are holes in the capsid shells that allow for the diffusion of macromolecules. CA also has nucleocapsid-like chaperone activity, promoting primer tRNA(i)-Met annealing to the multipartite primer-binding site (PBS), dimerization of Ty1 RNA and initiation of reverse transcription. The aspartyl protease (PR) mediates the proteolytic cleavages of the Gag and Gag-Pol polyproteins after assembly of the VLP. Functionally, reverse transcriptase/ribonuclease H (RT) is a multifunctional enzyme that catalyzes the conversion of the retro-elements RNA genome into dsDNA within the VLP. The enzyme displays a DNA polymerase activity that can copy either DNA or RNA templates, and a ribonuclease H (RNase H) activity that cleaves the RNA strand of RNA-DNA heteroduplexes during plus-strand synthesis and hydrolyzes RNA primers. The conversion leads to a linear dsDNA copy of the retrotransposon that includes long terminal repeats (LTRs) at both ends. Its function is as follows. Integrase (IN) targets the VLP to the nucleus, where a subparticle preintegration complex (PIC) containing at least integrase and the newly synthesized dsDNA copy of the retrotransposon must transit the nuclear membrane. Once in the nucleus, integrase performs the integration of the dsDNA into the host genome. This chain is Transposon Ty1-PR1 Gag-Pol polyprotein (TY1B-PR1), found in Saccharomyces cerevisiae (strain ATCC 204508 / S288c) (Baker's yeast).